A 44-amino-acid chain; its full sequence is M-factor (44 aa).

Positions 1–32 (MDSIATNTHSSSIVNAYNNNPTDVVKTQNIKN) are excised as a propeptide. Cysteine methyl ester is present on cysteine 41. Cysteine 41 is lipidated: S-farnesyl cysteine. A propeptide spans 42–44 (VIA) (removed in mature form).

It localises to the secreted. In terms of biological role, M-factor is a mating pheromone produced by M-type mating cells. All three mfm genes contribute to the production of M-factor. This Schizosaccharomyces pombe (strain 972 / ATCC 24843) (Fission yeast) protein is M-factor (mfm2).